We begin with the raw amino-acid sequence, 75 residues long: F1845 fimbrial adhesin operon regulatory protein DaaF (75 aa).

Its function is as follows. May have a possible regulatory function on the expression of the other daa genes. The polypeptide is F1845 fimbrial adhesin operon regulatory protein DaaF (daaF) (Escherichia coli).